The chain runs to 584 residues: Aspartate--tRNA(Asp/Asn) ligase (584 aa).

Residue Glu174 coordinates L-aspartate. The aspartate stretch occupies residues 198-201 (QLFK). Arg220 contributes to the L-aspartate binding site. ATP contacts are provided by residues 220–222 (RDE) and Gln229. His447 lines the L-aspartate pocket. Glu480 is a binding site for ATP. Residue Arg487 participates in L-aspartate binding. 532-535 (GFDR) lines the ATP pocket.

This sequence belongs to the class-II aminoacyl-tRNA synthetase family. Type 1 subfamily. As to quaternary structure, homodimer.

It is found in the cytoplasm. It carries out the reaction tRNA(Asx) + L-aspartate + ATP = L-aspartyl-tRNA(Asx) + AMP + diphosphate. Functionally, aspartyl-tRNA synthetase with relaxed tRNA specificity since it is able to aspartylate not only its cognate tRNA(Asp) but also tRNA(Asn). Reaction proceeds in two steps: L-aspartate is first activated by ATP to form Asp-AMP and then transferred to the acceptor end of tRNA(Asp/Asn). This is Aspartate--tRNA(Asp/Asn) ligase from Endomicrobium trichonymphae.